Here is a 199-residue protein sequence, read N- to C-terminus: NAD(P)H dehydrogenase (quinone) (199 aa).

One can recognise a Flavodoxin-like domain in the interval 4–190 (VLVLYYSAYG…AGARYQGQVI (187 aa)). FMN is bound by residues 10 to 15 (SAYGHI) and 78 to 80 (TRF). Position 12 (Y12) interacts with NAD(+). Residue W98 coordinates substrate. Residues 113 to 119 (STATQHG) and H134 contribute to the FMN site.

The protein belongs to the WrbA family. It depends on FMN as a cofactor.

It catalyses the reaction a quinone + NADH + H(+) = a quinol + NAD(+). It carries out the reaction a quinone + NADPH + H(+) = a quinol + NADP(+). This chain is NAD(P)H dehydrogenase (quinone), found in Rhodopseudomonas palustris (strain BisA53).